The chain runs to 750 residues: Photosystem I P700 chlorophyll a apoprotein A1 (750 aa).

A run of 8 helical transmembrane segments spans residues 70–93 (IFSA…FHGA), 156–179 (LYCT…FHYH), 195–219 (LNHH…HVSL), 291–309 (IAHH…GHMY), 346–369 (WHAQ…HHMY), 385–411 (LSLF…IFMV), 433–455 (AIIS…LYIH), and 531–549 (FLVH…LILL). [4Fe-4S] cluster-binding residues include Cys-573 and Cys-582. The next 2 helical transmembrane spans lie at 589 to 610 (HVFL…HFSW) and 664 to 686 (LSAY…MFLF). His-675 is a binding site for chlorophyll a'. Chlorophyll a-binding residues include Met-683 and Tyr-691. Trp-692 is a phylloquinone binding site. Residues 724–744 (AVGVTHYLLGGIATTWAFFLA) traverse the membrane as a helical segment.

This sequence belongs to the PsaA/PsaB family. The PsaA/B heterodimer binds the P700 chlorophyll special pair and subsequent electron acceptors. PSI consists of a core antenna complex that captures photons, and an electron transfer chain that converts photonic excitation into a charge separation. The eukaryotic PSI reaction center is composed of at least 11 subunits. P700 is a chlorophyll a/chlorophyll a' dimer, A0 is one or more chlorophyll a, A1 is one or both phylloquinones and FX is a shared 4Fe-4S iron-sulfur center. is required as a cofactor.

The protein resides in the plastid. It localises to the chloroplast thylakoid membrane. It carries out the reaction reduced [plastocyanin] + hnu + oxidized [2Fe-2S]-[ferredoxin] = oxidized [plastocyanin] + reduced [2Fe-2S]-[ferredoxin]. Its function is as follows. PsaA and PsaB bind P700, the primary electron donor of photosystem I (PSI), as well as the electron acceptors A0, A1 and FX. PSI is a plastocyanin-ferredoxin oxidoreductase, converting photonic excitation into a charge separation, which transfers an electron from the donor P700 chlorophyll pair to the spectroscopically characterized acceptors A0, A1, FX, FA and FB in turn. Oxidized P700 is reduced on the lumenal side of the thylakoid membrane by plastocyanin. The polypeptide is Photosystem I P700 chlorophyll a apoprotein A1 (Lotus japonicus (Lotus corniculatus var. japonicus)).